The following is a 777-amino-acid chain: Zinc finger protein 786 (777 aa).

In terms of domain architecture, KRAB spans 9–80 (LTFEDVAIYF…WGEKKKPDKE (72 aa)). Residues 194–216 (NSCPVCRENSWEKNHLVKQQKGH) form a C2H2-type 1; degenerate zinc finger. The segment at 240 to 262 (ISCLGCGKSFRLKQYLVRHLDIH) adopts a C2H2-type 2 zinc-finger fold. The C2H2-type 3; degenerate zinc finger occupies 268-291 (PQCPKCKMCFHHERTLFSHHLKNS). A C2H2-type 4; degenerate zinc finger spans residues 420–442 (VFCRKCGQGFTKHCGLTEHTRIL). C2H2-type zinc fingers lie at residues 448–470 (FWCAQCGRNFSQKGQLLRHQRLH), 476–498 (FQCTMCELRFHLKSRLRAHQLQH), 504–526 (FSCSECGRAFTHQCKLREHLRVH), 532–554 (FQCPECHKSFRLKGVLKAHQRIH), 560–582 (FSCGECGKGFIRQSKLTEHFRVH), 588–610 (FQCPECDRRFRLKGQLLSHQRLH), 616–638 (FQCPECGKSYRVKADMKAHQLLH), 644–665 (FSCQCGKGFAKQSKLVEHMRTH), 671–693 (FQCPKCDKSFRLKAQLLSHQGLH), 699–721 (FHCPECDKNFREKGHMLRHQRIH), and 727–749 (FACGDCGKGFIYKSKLAEHIRVH).

This sequence belongs to the krueppel C2H2-type zinc-finger protein family.

Its subcellular location is the nucleus. In terms of biological role, may be involved in transcriptional regulation. This is Zinc finger protein 786 (Znf786) from Mus musculus (Mouse).